A 331-amino-acid chain; its full sequence is Phosphoribosylformylglycinamidine cyclo-ligase (331 aa).

The protein belongs to the AIR synthase family.

Its subcellular location is the cytoplasm. It carries out the reaction 2-formamido-N(1)-(5-O-phospho-beta-D-ribosyl)acetamidine + ATP = 5-amino-1-(5-phospho-beta-D-ribosyl)imidazole + ADP + phosphate + H(+). It functions in the pathway purine metabolism; IMP biosynthesis via de novo pathway; 5-amino-1-(5-phospho-D-ribosyl)imidazole from N(2)-formyl-N(1)-(5-phospho-D-ribosyl)glycinamide: step 2/2. This Clostridium botulinum (strain 657 / Type Ba4) protein is Phosphoribosylformylglycinamidine cyclo-ligase.